Consider the following 162-residue polypeptide: GLIGAPIAAPIAAPLATSVVSTRTIHAAPVAVAHAAPLAVAHAAPVAVAHAAPLAVAHAAPVAVAHAAPLAVAHAAPAIAYGGYGSGLIGGAYGGGLIGSRSLYGGYGSGLGIARSTPGGYGSGLIGGAYGSGLIGGGLYGARYGLGAPALGHGLIGGAHLY.

4 consecutive repeat copies span residues 27–30 (AAPV), 43–46 (AAPV), 59–62 (AAPV), and 75–78 (AAPA).

In terms of biological role, component of the larval cuticle. The protein is Larval cuticle protein F1 of Tenebrio molitor (Yellow mealworm beetle).